Here is a 125-residue protein sequence, read N- to C-terminus: Small ribosomal subunit protein uS13 (125 aa).

Positions 90–125 (QRHRKGLPVRGQRTKTNARTRKGPKRTVAGKKKATK) are disordered.

This sequence belongs to the universal ribosomal protein uS13 family. As to quaternary structure, part of the 30S ribosomal subunit. Forms a loose heterodimer with protein S19. Forms two bridges to the 50S subunit in the 70S ribosome.

Its function is as follows. Located at the top of the head of the 30S subunit, it contacts several helices of the 16S rRNA. In the 70S ribosome it contacts the 23S rRNA (bridge B1a) and protein L5 of the 50S subunit (bridge B1b), connecting the 2 subunits; these bridges are implicated in subunit movement. Contacts the tRNAs in the A and P-sites. The sequence is that of Small ribosomal subunit protein uS13 from Bifidobacterium longum subsp. infantis (strain ATCC 15697 / DSM 20088 / JCM 1222 / NCTC 11817 / S12).